Consider the following 1081-residue polypeptide: Disheveled-associated activator of morphogenesis 1-A (1081 aa).

A GBD/FH3 domain is found at 45 to 418 (LPVPPVEELD…QIVIQNEKGQ (374 aa)). 2 disordered regions span residues 455-476 (KEHNELQQKLEKKERECDAKTQ) and 519-615 (RTVC…PLKS). Residues 526-536 (PGGPPPPPGAP) show a composition bias toward pro residues. Residues 538-547 (GPMSMPSGNF) are compositionally biased toward low complexity. Positions 548–585 (MPPPPPPPPPFPGGMAPPPPPPPPPPPPPGGPPPPPGL) are enriched in pro residues. Residues 586–600 (PLLGAAPPGAPLGLS) are compositionally biased toward low complexity. The FH2 domain occupies 603 to 1012 (KKNIPQPKNP…EERRIRMEAQ (410 aa)). Residues 696 to 705 (AQNCNILLSR) are actin-binding. Residues 1013 to 1029 (LKEQRERERKARKAKEN) show a composition bias toward basic and acidic residues. Disordered stretches follow at residues 1013-1038 (LKEQRERERKARKAKENGEEEGEFDD) and 1060-1081 (RKRIVSQTTESSRERPVTKLNY). One can recognise a DAD domain in the interval 1030–1061 (GEEEGEFDDLVSALRSGEVFDKDLSKLKRNRK). Residues 1070 to 1081 (SSRERPVTKLNY) show a composition bias toward basic and acidic residues.

The protein localises to the cytoplasm. It is found in the cytoskeleton. The protein resides in the cilium basal body. Binds to disheveled (dsh) and Rho, and mediates Wnt-induced dsh-Rho complex formation during gastrulation. May play a role as a scaffolding protein to recruit Rho-GDP and Rho-GEF, thereby enhancing Rho-GTP formation. Can direct nucleation and elongation of new actin filaments. Involved in building functional cilia. Involved in building functional cilia. Involved in the organization of the subapical actin network in multiciliated epithelial cells. The chain is Disheveled-associated activator of morphogenesis 1-A (daam1-a) from Xenopus laevis (African clawed frog).